Consider the following 145-residue polypeptide: Mediator of RNA polymerase II transcription subunit 21 (145 aa).

A coiled-coil region spans residues 79-112; it reads EESTAALQAASLRQLEEENQEAAARLEEVVYRGD.

The protein belongs to the Mediator complex subunit 21 family. Component of the Mediator complex.

It localises to the nucleus. Its function is as follows. Component of the Mediator complex, a coactivator involved in the regulated transcription of nearly all RNA polymerase II-dependent genes. Mediator functions as a bridge to convey information from gene-specific regulatory proteins to the basal RNA polymerase II transcription machinery. Mediator is recruited to promoters by direct interactions with regulatory proteins and serves as a scaffold for the assembly of a functional preinitiation complex with RNA polymerase II and the general transcription factors. This is Mediator of RNA polymerase II transcription subunit 21 (med21) from Danio rerio (Zebrafish).